The following is a 402-amino-acid chain: L-threonine ammonia-lyase (402 aa).

N6-(pyridoxal phosphate)lysine is present on lysine 51. Pyridoxal 5'-phosphate-binding positions include asparagine 78, 178 to 181 (GGGL), and serine 302. An ACT domain is found at 327 to 402 (KLKVELDDLP…GVGYLVDVLK (76 aa)).

Belongs to the serine/threonine dehydratase family. Requires pyridoxal 5'-phosphate as cofactor.

The catalysed reaction is L-threonine = 2-oxobutanoate + NH4(+). It carries out the reaction L-serine = pyruvate + NH4(+). Its pathway is amino-acid biosynthesis; L-isoleucine biosynthesis; 2-oxobutanoate from L-threonine: step 1/1. Its function is as follows. Catalyzes the conversion of threonine to 2-oxobutanoate and ammonia. Functions in the threonine-dependent pathway of isoleucine biosynthesis, which is the minor pathway for isoleucine biosynthesis in G.sulfurreducens. Also displays serine ammonia-lyase activity, yielding pyruvate from L-serine. The chain is L-threonine ammonia-lyase from Geobacter sulfurreducens (strain ATCC 51573 / DSM 12127 / PCA).